A 1368-amino-acid chain; its full sequence is DNA-directed RNA polymerase subunit beta (1368 aa).

It belongs to the RNA polymerase beta chain family. As to quaternary structure, the RNAP catalytic core consists of 2 alpha, 1 beta, 1 beta' and 1 omega subunit. When a sigma factor is associated with the core the holoenzyme is formed, which can initiate transcription.

It carries out the reaction RNA(n) + a ribonucleoside 5'-triphosphate = RNA(n+1) + diphosphate. Its function is as follows. DNA-dependent RNA polymerase catalyzes the transcription of DNA into RNA using the four ribonucleoside triphosphates as substrates. The chain is DNA-directed RNA polymerase subunit beta from Burkholderia ambifaria (strain MC40-6).